A 426-amino-acid polypeptide reads, in one-letter code: GATA type zinc finger protein asd-4 (426 aa).

The GATA-type zinc-finger motif lies at 16 to 40 (CQNCATSTTPLWRRDEMGQVLCNAC). Disordered regions lie at residues 70–143 (RPDL…NPHI) and 159–178 (PGFG…MNGE). Residues 104–113 (PNNPAAAARR) are compositionally biased toward low complexity. Residues 128–138 (SPVSRTGTPNV) are compositionally biased toward polar residues. A coiled-coil region spans residues 182–292 (QTHEQLLAAN…QDNGRHKKIR (111 aa)). Residues 306-318 (VEPQQPEQQQPAP) show a composition bias toward low complexity. The disordered stretch occupies residues 306–426 (VEPQQPEQQQ…PVEEAPKAES (121 aa)). The span at 335-353 (APAPAPEAAPEQAPAPAPE) shows a compositional bias: pro residues. The span at 354 to 419 (PVQEQAQEPE…SEPPTTAPVE (66 aa)) shows a compositional bias: low complexity.

As to quaternary structure, homotetramer.

The protein localises to the nucleus. Its function is as follows. Transcriptional regulator that functions in sexual development; disruption of asd-4 gene results in agenesis of ascus and ascospore with macroscopically normal fruiting body formation. The GATA-type zinc finger domain binds to DNA sequences from its own promoter region. The protein is GATA type zinc finger protein asd-4 (asd-4) of Neurospora crassa (strain ATCC 24698 / 74-OR23-1A / CBS 708.71 / DSM 1257 / FGSC 987).